The following is a 44-amino-acid chain: Photosystem I reaction center subunit IX (44 aa).

The chain crosses the membrane as a helical span at residues 7-27 (YLSVAPVLSTLSLGFFAGFLI).

Belongs to the PsaJ family.

The protein resides in the plastid membrane. Functionally, may help in the organization of the PsaE and PsaF subunits. The protein is Photosystem I reaction center subunit IX of Cuscuta obtusiflora (Peruvian dodder).